Consider the following 254-residue polypeptide: 7-cyano-7-deazaguanine synthase (254 aa).

30–40 (YSGGQDSATCL) provides a ligand contact to ATP. Zn(2+)-binding residues include Cys218, Cys233, Cys236, and Cys239.

This sequence belongs to the QueC family. Zn(2+) serves as cofactor.

It carries out the reaction 7-carboxy-7-deazaguanine + NH4(+) + ATP = 7-cyano-7-deazaguanine + ADP + phosphate + H2O + H(+). It functions in the pathway purine metabolism; 7-cyano-7-deazaguanine biosynthesis. In terms of biological role, catalyzes the ATP-dependent conversion of 7-carboxy-7-deazaguanine (CDG) to 7-cyano-7-deazaguanine (preQ(0)). This chain is 7-cyano-7-deazaguanine synthase, found in Zymomonas mobilis subsp. mobilis (strain ATCC 31821 / ZM4 / CP4).